Consider the following 159-residue polypeptide: 2-C-methyl-D-erythritol 2,4-cyclodiphosphate synthase (159 aa).

Residues Asp-10 and His-12 each coordinate a divalent metal cation. Residues 10-12 (DVH) and 36-37 (HS) each bind 4-CDP-2-C-methyl-D-erythritol 2-phosphate. Residue His-44 participates in a divalent metal cation binding. Residues 58 to 60 (DIG), 63 to 67 (FPDTD), 102 to 108 (AQAPKMA), 134 to 137 (TTTE), Phe-141, and Arg-144 contribute to the 4-CDP-2-C-methyl-D-erythritol 2-phosphate site.

Belongs to the IspF family. Homotrimer. The cofactor is a divalent metal cation.

The catalysed reaction is 4-CDP-2-C-methyl-D-erythritol 2-phosphate = 2-C-methyl-D-erythritol 2,4-cyclic diphosphate + CMP. The protein operates within isoprenoid biosynthesis; isopentenyl diphosphate biosynthesis via DXP pathway; isopentenyl diphosphate from 1-deoxy-D-xylulose 5-phosphate: step 4/6. Functionally, involved in the biosynthesis of isopentenyl diphosphate (IPP) and dimethylallyl diphosphate (DMAPP), two major building blocks of isoprenoid compounds. Catalyzes the conversion of 4-diphosphocytidyl-2-C-methyl-D-erythritol 2-phosphate (CDP-ME2P) to 2-C-methyl-D-erythritol 2,4-cyclodiphosphate (ME-CPP) with a corresponding release of cytidine 5-monophosphate (CMP). In Shewanella sp. (strain ANA-3), this protein is 2-C-methyl-D-erythritol 2,4-cyclodiphosphate synthase.